A 316-amino-acid polypeptide reads, in one-letter code: 4-hydroxy-3-methylbut-2-enyl diphosphate reductase (316 aa).

Cysteine 12 provides a ligand contact to [4Fe-4S] cluster. The (2E)-4-hydroxy-3-methylbut-2-enyl diphosphate site is built by histidine 41 and histidine 74. Dimethylallyl diphosphate contacts are provided by histidine 41 and histidine 74. Isopentenyl diphosphate contacts are provided by histidine 41 and histidine 74. Position 96 (cysteine 96) interacts with [4Fe-4S] cluster. Residue histidine 124 participates in (2E)-4-hydroxy-3-methylbut-2-enyl diphosphate binding. Histidine 124 is a binding site for dimethylallyl diphosphate. Histidine 124 is an isopentenyl diphosphate binding site. The active-site Proton donor is the glutamate 126. Residue threonine 169 coordinates (2E)-4-hydroxy-3-methylbut-2-enyl diphosphate. Position 199 (cysteine 199) interacts with [4Fe-4S] cluster. 4 residues coordinate (2E)-4-hydroxy-3-methylbut-2-enyl diphosphate: serine 227, serine 228, asparagine 229, and serine 271. Serine 227, serine 228, asparagine 229, and serine 271 together coordinate dimethylallyl diphosphate. 4 residues coordinate isopentenyl diphosphate: serine 227, serine 228, asparagine 229, and serine 271.

Belongs to the IspH family. Requires [4Fe-4S] cluster as cofactor.

The enzyme catalyses isopentenyl diphosphate + 2 oxidized [2Fe-2S]-[ferredoxin] + H2O = (2E)-4-hydroxy-3-methylbut-2-enyl diphosphate + 2 reduced [2Fe-2S]-[ferredoxin] + 2 H(+). It carries out the reaction dimethylallyl diphosphate + 2 oxidized [2Fe-2S]-[ferredoxin] + H2O = (2E)-4-hydroxy-3-methylbut-2-enyl diphosphate + 2 reduced [2Fe-2S]-[ferredoxin] + 2 H(+). The protein operates within isoprenoid biosynthesis; dimethylallyl diphosphate biosynthesis; dimethylallyl diphosphate from (2E)-4-hydroxy-3-methylbutenyl diphosphate: step 1/1. Its pathway is isoprenoid biosynthesis; isopentenyl diphosphate biosynthesis via DXP pathway; isopentenyl diphosphate from 1-deoxy-D-xylulose 5-phosphate: step 6/6. Catalyzes the conversion of 1-hydroxy-2-methyl-2-(E)-butenyl 4-diphosphate (HMBPP) into a mixture of isopentenyl diphosphate (IPP) and dimethylallyl diphosphate (DMAPP). Acts in the terminal step of the DOXP/MEP pathway for isoprenoid precursor biosynthesis. The protein is 4-hydroxy-3-methylbut-2-enyl diphosphate reductase of Xanthomonas oryzae pv. oryzae (strain MAFF 311018).